The primary structure comprises 386 residues: tRNA N6-adenosine threonylcarbamoyltransferase (386 aa).

Fe cation is bound by residues His-112 and His-116. Substrate is bound by residues Leu-134 to Gly-138, Asp-167, Gly-180, and Asn-322. Asp-350 lines the Fe cation pocket.

Belongs to the KAE1 / TsaD family. The cofactor is Fe(2+).

The protein localises to the cytoplasm. The catalysed reaction is L-threonylcarbamoyladenylate + adenosine(37) in tRNA = N(6)-L-threonylcarbamoyladenosine(37) in tRNA + AMP + H(+). Its function is as follows. Required for the formation of a threonylcarbamoyl group on adenosine at position 37 (t(6)A37) in tRNAs that read codons beginning with adenine. Is involved in the transfer of the threonylcarbamoyl moiety of threonylcarbamoyl-AMP (TC-AMP) to the N6 group of A37, together with TsaE and TsaB. TsaD likely plays a direct catalytic role in this reaction. This chain is tRNA N6-adenosine threonylcarbamoyltransferase, found in Rickettsia akari (strain Hartford).